A 510-amino-acid polypeptide reads, in one-letter code: Mitochondrial metal transporter 1 (510 aa).

The interval 120 to 141 is disordered; sequence ADKPSSLNLHSHTHSHGHTHSH. The segment covering 130–141 has biased composition (basic residues); sequence SHTHSHGHTHSH. 6 consecutive transmembrane segments (helical) span residues 165-185, 194-214, 241-261, 286-306, 333-353, and 356-376; these read WVGL…GIVF, AIHA…VGLA, LAMA…GPVI, VTDI…EWIF, LTSL…IQSL, and IGGL…MCIA.

The protein belongs to the cation diffusion facilitator (CDF) transporter (TC 2.A.4) family. SLC30A subfamily.

The protein resides in the mitochondrion membrane. Mitochondrial metal transporter involved in mitochondrial iron accumulation. The protein is Mitochondrial metal transporter 1 (MMT1) of Saccharomyces cerevisiae (strain ATCC 204508 / S288c) (Baker's yeast).